The primary structure comprises 650 residues: Putative polypeptide N-acetylgalactosaminyltransferase 9 (650 aa).

At 1–11 (MAFIWRRRSTT) the chain is on the cytoplasmic side. Residues 12–31 (IVKLVAFALAIWFCIAFLVY) form a helical; Signal-anchor for type II membrane protein membrane-spanning segment. Residues 32–650 (TDDTRRRAAQ…TLENYDSSKL (619 aa)) are Lumenal-facing. Residues 84-154 (NVIGGGGQKQ…NPGELGKPVR (71 aa)) form a disordered region. Positions 107-136 (HKADLQAERMRKKAAEQPKKKPQEDSKKVI) are enriched in basic and acidic residues. Disulfide bonds link C198–C432, C423–C499, C535–C554, C577–C590, and C616–C631. The catalytic subdomain A stretch occupies residues 208–317 (LPKTDVIICF…EGWLEPLLDR (110 aa)). Substrate-binding residues include C216, D249, and R278. Mn(2+) is bound at residue D301. Substrate-binding residues include S302 and H303. H303 is a Mn(2+) binding site. 2 N-linked (GlcNAc...) asparagine glycosylation sites follow: N321 and N373. A catalytic subdomain B region spans residues 378-440 (PVYSPTMAGG…PCSHVGHIFR (63 aa)). H437 provides a ligand contact to Mn(2+). Positions 440 and 445 each coordinate substrate. In terms of domain architecture, Ricin B-type lectin spans 521 to 643 (AHGEIRNLGY…SLSRQQWTLE (123 aa)).

This sequence belongs to the glycosyltransferase 2 family. GalNAc-T subfamily. Isoform A forms homotetramer. Isoform B forms homodimer. Requires Mn(2+) as cofactor.

It is found in the golgi apparatus membrane. It carries out the reaction L-seryl-[protein] + UDP-N-acetyl-alpha-D-galactosamine = a 3-O-[N-acetyl-alpha-D-galactosaminyl]-L-seryl-[protein] + UDP + H(+). It catalyses the reaction L-threonyl-[protein] + UDP-N-acetyl-alpha-D-galactosamine = a 3-O-[N-acetyl-alpha-D-galactosaminyl]-L-threonyl-[protein] + UDP + H(+). It participates in protein modification; protein glycosylation. In terms of biological role, catalyzes the initial reaction in O-linked oligosaccharide biosynthesis, the transfer of an N-acetyl-D-galactosamine residue to a serine or threonine residue on the protein receptor. It can both act as a peptide transferase that transfers GalNAc onto unmodified peptide substrates, and as a glycopeptide transferase that requires the prior addition of a GalNAc on a peptide before adding additional GalNAc moieties. Its function is as follows. N-acetylgalactosaminyltransferase which preferentially O-glycosylates negatively charge substrates. O-glycosylates mucin-like protein Sgs3 in the salivary gland but to a lesser extent than isoform B. By regulating the O-glycosylation of secretory cargo proteins plays a role in the morphology and maturation of salivary gland secretory granules. N-acetylgalactosaminyltransferase which preferentially O-glycosylates positively charge substrates. O-glycosylates mucin-like protein Sgs3 in the salivary gland. By regulating the O-glycosylation of secretory cargo proteins, plays a role in the morphology and maturation of salivary gland secretory granules. The sequence is that of Putative polypeptide N-acetylgalactosaminyltransferase 9 from Drosophila melanogaster (Fruit fly).